Here is a 503-residue protein sequence, read N- to C-terminus: Medium/long-chain-fatty-acid--CoA ligase FadD17 (503 aa).

It belongs to the ATP-dependent AMP-binding enzyme family.

It catalyses the reaction a medium-chain fatty acid + ATP + CoA = a medium-chain fatty acyl-CoA + AMP + diphosphate. The enzyme catalyses a long-chain fatty acid + ATP + CoA = a long-chain fatty acyl-CoA + AMP + diphosphate. It functions in the pathway lipid metabolism; fatty acid biosynthesis. Catalyzes the activation of medium/long-chain fatty acids as acyl-coenzyme A (acyl-CoA), which are then transferred to the multifunctional polyketide synthase (PKS) type III for further chain extension. In Mycobacterium marinum (strain ATCC BAA-535 / M), this protein is Medium/long-chain-fatty-acid--CoA ligase FadD17 (fadD17).